The chain runs to 179 residues: Large ribosomal subunit protein uL5 (179 aa).

The protein belongs to the universal ribosomal protein uL5 family. In terms of assembly, part of the 50S ribosomal subunit; part of the 5S rRNA/L5/L18/L25 subcomplex. Contacts the 5S rRNA and the P site tRNA. Forms a bridge to the 30S subunit in the 70S ribosome.

Functionally, this is one of the proteins that bind and probably mediate the attachment of the 5S RNA into the large ribosomal subunit, where it forms part of the central protuberance. In the 70S ribosome it contacts protein S13 of the 30S subunit (bridge B1b), connecting the 2 subunits; this bridge is implicated in subunit movement. Contacts the P site tRNA; the 5S rRNA and some of its associated proteins might help stabilize positioning of ribosome-bound tRNAs. The polypeptide is Large ribosomal subunit protein uL5 (Enterobacter sp. (strain 638)).